The chain runs to 375 residues: Anhydro-N-acetylmuramic acid kinase (375 aa).

12 to 19 serves as a coordination point for ATP; that stretch reads GTSMDGVD.

Belongs to the anhydro-N-acetylmuramic acid kinase family.

It catalyses the reaction 1,6-anhydro-N-acetyl-beta-muramate + ATP + H2O = N-acetyl-D-muramate 6-phosphate + ADP + H(+). It participates in amino-sugar metabolism; 1,6-anhydro-N-acetylmuramate degradation. The protein operates within cell wall biogenesis; peptidoglycan recycling. Functionally, catalyzes the specific phosphorylation of 1,6-anhydro-N-acetylmuramic acid (anhMurNAc) with the simultaneous cleavage of the 1,6-anhydro ring, generating MurNAc-6-P. Is required for the utilization of anhMurNAc either imported from the medium or derived from its own cell wall murein, and thus plays a role in cell wall recycling. The sequence is that of Anhydro-N-acetylmuramic acid kinase from Photobacterium profundum (strain SS9).